The primary structure comprises 451 residues: Enolase (451 aa).

Gln163 contributes to the (2R)-2-phosphoglycerate binding site. Glu205 serves as the catalytic Proton donor. The Mg(2+) site is built by Asp258, Glu308, and Asp335. Lys360, Arg389, Ser390, and Lys411 together coordinate (2R)-2-phosphoglycerate. The active-site Proton acceptor is the Lys360.

It belongs to the enolase family. The cofactor is Mg(2+).

It is found in the cytoplasm. Its subcellular location is the secreted. The protein resides in the cell surface. It carries out the reaction (2R)-2-phosphoglycerate = phosphoenolpyruvate + H2O. Its pathway is carbohydrate degradation; glycolysis; pyruvate from D-glyceraldehyde 3-phosphate: step 4/5. In terms of biological role, catalyzes the reversible conversion of 2-phosphoglycerate (2-PG) into phosphoenolpyruvate (PEP). It is essential for the degradation of carbohydrates via glycolysis. The chain is Enolase from Mycoplasma capricolum subsp. capricolum (strain California kid / ATCC 27343 / NCTC 10154).